A 221-amino-acid polypeptide reads, in one-letter code: MELTLHEARVIGCLLEKEITTPEQYPLSLNALTLACNQKTSREPVLDLSEAQVQDALDSLTKKRLISEQSGFGSRVVKYKHRFCNTEFSELQLSPAAVAIVCLLLLRGPQTPGELRTRSNRLHEFKDVIEVEDCIKQLISRTKPILKQLPREPGRRESRYVELFSETSANVVTTSDHTDKLHTAPVAALVEHGALVARVTELEQQVATLTQKFDELIASLT.

This sequence belongs to the UPF0502 family.

In Shewanella sp. (strain W3-18-1), this protein is UPF0502 protein Sputw3181_2381.